The primary structure comprises 594 residues: Trehalase (594 aa).

An N-terminal signal peptide occupies residues 1–27 (MDFLNKKIQKILFICILSFLIVNLTKS). N-linked (GlcNAc...) asparagine glycosylation is found at N56, N70, N97, and N166. Residues R190, 197–198 (WD), and N234 contribute to the substrate site. N242 carries an N-linked (GlcNAc...) asparagine glycan. Position 243 to 245 (243 to 245 (RSQ)) interacts with substrate. N-linked (GlcNAc...) asparagine glycosylation is found at N261 and N305. Substrate is bound by residues 312 to 314 (RPE) and G346. Residue D348 is the Proton donor/acceptor of the active site. 4 N-linked (GlcNAc...) asparagine glycosylation sites follow: N361, N395, N513, and N537. E549 functions as the Proton donor/acceptor in the catalytic mechanism. E564 serves as a coordination point for substrate.

This sequence belongs to the glycosyl hydrolase 37 family.

The enzyme catalyses alpha,alpha-trehalose + H2O = alpha-D-glucose + beta-D-glucose. This chain is Trehalase (treh), found in Dictyostelium discoideum (Social amoeba).